A 495-amino-acid chain; its full sequence is BUB3-interacting and GLEBS motif-containing protein ZNF207 (495 aa).

The microtubule-binding region stretch occupies residues Met-1–Glu-92. C2H2-type zinc fingers lie at residues Pro-11–His-34 and Phe-35–His-58. Basic and acidic residues predominate over residues Gln-99–Asp-111. 3 disordered regions span residues Gln-99–Pro-161, Pro-252–Glu-292, and Val-316–Thr-372. Acidic residues predominate over residues Asp-112–Ser-121. The span at Phe-127–Gln-136 shows a compositional bias: polar residues. Residues Met-142–Pro-161 are compositionally biased toward pro residues. 2 stretches are compositionally biased toward low complexity: residues Ser-283–Glu-292 and Thr-326–Thr-372. A GLEBS region spans residues Ala-376 to Gln-408. A disordered region spans residues Pro-462 to Tyr-495. The segment covering Gly-464–Met-484 has biased composition (pro residues).

Interacts (via GLEBS region) with BUB3. In day-13 embryo, strongly expressed in the nervous system (brain, spinal cord and dorsal root ganglia), with strong to weak expression in other regions. Continues to be strongly expressed in the neonatal brain while expression is weak in the brain and spinal cord of adult.

The protein resides in the nucleus. The protein localises to the chromosome. It is found in the centromere. It localises to the kinetochore. Its subcellular location is the cytoplasm. The protein resides in the cytoskeleton. The protein localises to the spindle. Its function is as follows. Kinetochore- and microtubule-binding protein that plays a key role in spindle assembly. ZNF207/BuGZ is mainly composed of disordered low-complexity regions and undergoes phase transition or coacervation to form temperature-dependent liquid droplets. Coacervation promotes microtubule bundling and concentrates tubulin, promoting microtubule polymerization and assembly of spindle and spindle matrix by concentrating its building blocks. Also acts as a regulator of mitotic chromosome alignment by mediating the stability and kinetochore loading of BUB3. Mechanisms by which BUB3 is protected are unclear: according to a first report, ZNF207/BuGZ may act by blocking ubiquitination and proteasomal degradation of BUB3. According to another report, the stabilization is independent of the proteasome. The sequence is that of BUB3-interacting and GLEBS motif-containing protein ZNF207 from Mus musculus (Mouse).